The chain runs to 401 residues: Tryptophan synthase beta chain (401 aa).

Lysine 92 carries the post-translational modification N6-(pyridoxal phosphate)lysine.

It belongs to the TrpB family. In terms of assembly, tetramer of two alpha and two beta chains. It depends on pyridoxal 5'-phosphate as a cofactor.

It catalyses the reaction (1S,2R)-1-C-(indol-3-yl)glycerol 3-phosphate + L-serine = D-glyceraldehyde 3-phosphate + L-tryptophan + H2O. The protein operates within amino-acid biosynthesis; L-tryptophan biosynthesis; L-tryptophan from chorismate: step 5/5. Functionally, the beta subunit is responsible for the synthesis of L-tryptophan from indole and L-serine. The chain is Tryptophan synthase beta chain from Ruthia magnifica subsp. Calyptogena magnifica.